Here is a 282-residue protein sequence, read N- to C-terminus: Phosphate import ATP-binding protein PstB (282 aa).

Polar residues predominate over residues 1–25 (MKALNANISTMSEVSRSATPQSDSP). Positions 1 to 26 (MKALNANISTMSEVSRSATPQSDSPA) are disordered. The 242-residue stretch at 36–277 (IRIANFNAWY…PQEKRTDDYV (242 aa)) folds into the ABC transporter domain. ATP is bound at residue 68–75 (GPSGCGKS).

It belongs to the ABC transporter superfamily. Phosphate importer (TC 3.A.1.7) family. In terms of assembly, the complex is composed of two ATP-binding proteins (PstB), two transmembrane proteins (PstC and PstA) and a solute-binding protein (PstS).

Its subcellular location is the cell inner membrane. The enzyme catalyses phosphate(out) + ATP + H2O = ADP + 2 phosphate(in) + H(+). Functionally, part of the ABC transporter complex PstSACB involved in phosphate import. Responsible for energy coupling to the transport system. This Rhodopirellula baltica (strain DSM 10527 / NCIMB 13988 / SH1) protein is Phosphate import ATP-binding protein PstB.